We begin with the raw amino-acid sequence, 216 residues long: Small ribosomal subunit protein uS3c (216 aa).

A KH type-2 domain is found at 43-118 (IKNYIQKNRR…KLNIAIVKVT (76 aa)).

It belongs to the universal ribosomal protein uS3 family. As to quaternary structure, part of the 30S ribosomal subunit.

The protein localises to the plastid. It is found in the chloroplast. The polypeptide is Small ribosomal subunit protein uS3c (rps3) (Phaseolus angularis (Azuki bean)).